Reading from the N-terminus, the 127-residue chain is Spore germination protein 1 (127 aa).

An N-terminal signal peptide occupies residues 1-25; it reads MNIKNSLILIISTIFVLSMINGGLT. N-linked (GlcNAc...) asparagine glycans are attached at residues Asn-54 and Asn-118.

This sequence belongs to the Dictyostelium gerABC family.

It localises to the secreted. In Dictyostelium discoideum (Social amoeba), this protein is Spore germination protein 1 (gerA).